The primary structure comprises 173 residues: Translation initiation factor IF-3 (173 aa).

It belongs to the IF-3 family. As to quaternary structure, monomer.

The protein resides in the cytoplasm. Functionally, IF-3 binds to the 30S ribosomal subunit and shifts the equilibrium between 70S ribosomes and their 50S and 30S subunits in favor of the free subunits, thus enhancing the availability of 30S subunits on which protein synthesis initiation begins. This is Translation initiation factor IF-3 from Ehrlichia chaffeensis (strain ATCC CRL-10679 / Arkansas).